Here is a 403-residue protein sequence, read N- to C-terminus: Argininosuccinate synthase (403 aa).

ATP-binding positions include 12-20 (AYSGGLDTS) and Ala-39. L-citrulline contacts are provided by Tyr-90 and Ser-95. Gly-120 lines the ATP pocket. Thr-122, Asn-126, and Asp-127 together coordinate L-aspartate. Residue Asn-126 coordinates L-citrulline. Residues Arg-130, Ser-182, Ser-191, Glu-267, and Tyr-279 each coordinate L-citrulline.

The protein belongs to the argininosuccinate synthase family. Type 1 subfamily. In terms of assembly, homotetramer.

The protein localises to the cytoplasm. It carries out the reaction L-citrulline + L-aspartate + ATP = 2-(N(omega)-L-arginino)succinate + AMP + diphosphate + H(+). Its pathway is amino-acid biosynthesis; L-arginine biosynthesis; L-arginine from L-ornithine and carbamoyl phosphate: step 2/3. The protein is Argininosuccinate synthase of Ruthia magnifica subsp. Calyptogena magnifica.